The following is an 841-amino-acid chain: 27S pre-rRNA (guanosine(2922)-2'-O)-methyltransferase (841 aa).

Positions 58, 60, 78, 94, and 119 each coordinate S-adenosyl-L-methionine. Lys-159 (proton acceptor) is an active-site residue. Positions 360–389 form a coiled coil; that stretch reads QEKQRLNVKRERRRKNEMKQKELQRMQMNM. A phosphoserine mark is found at Ser-455 and Ser-464. Disordered stretches follow at residues 480 to 534 and 565 to 654; these read RDAK…DDEA and NNVE…HSRD. Basic and acidic residues predominate over residues 505 to 517; sequence SLEKKEEEGKDYI. Residues 518–534 are compositionally biased toward acidic residues; the sequence is EDNDDEGVEGDSDDDEA. Ser-529 carries the phosphoserine modification. Over residues 574-585 the composition is skewed to polar residues; sequence NTVNDGIMSSES. A compositionally biased stretch (basic and acidic residues) spans 598 to 607; it reads HEEMHQKQDE. Acidic residues-rich tracts occupy residues 608 to 621 and 629 to 641; these read ADSSDESSSDDSDF and ASEEFDSDYDSEE. The span at 642 to 654 shows a compositional bias: basic and acidic residues; that stretch reads EKNQTKKEKHSRD.

This sequence belongs to the class I-like SAM-binding methyltransferase superfamily. RNA methyltransferase RlmE family. SPB1 subfamily. In terms of assembly, component of the nucleolar and nucleoplasmic pre-60S ribosomal particle. Interacts with the snoRNA-associated proteins NOP1 and NOP58.

It is found in the nucleus. Its subcellular location is the nucleolus. The catalysed reaction is guanosine(2922) in 27S pre-rRNA + S-adenosyl-L-methionine = 2'-O-methylguanosine(2922) in 27S pre-rRNA + S-adenosyl-L-homocysteine + H(+). Its function is as follows. Required for proper assembly of pre-ribosomal particles during the biogenesis of the 60S ribosomal subunit. Specifically methylates the guanosine in position 2922 of the 25S rRNA at the stage of 27S pre-rRNA maturation. Also methylates the uridine in position 2921 in the absence of methylation of this residue guided by snoRNA snR52 at the stage of 35S pre-rRNA maturation. The protein is 27S pre-rRNA (guanosine(2922)-2'-O)-methyltransferase of Saccharomyces cerevisiae (strain ATCC 204508 / S288c) (Baker's yeast).